Reading from the N-terminus, the 144-residue chain is Large ribosomal subunit protein uL16 (144 aa).

Residues 1-19 are compositionally biased toward basic residues; sequence MLLPKRVKYRRQHRPKTTG. A disordered region spans residues 1-23; sequence MLLPKRVKYRRQHRPKTTGRSKG.

It belongs to the universal ribosomal protein uL16 family. As to quaternary structure, part of the 50S ribosomal subunit.

In terms of biological role, binds 23S rRNA and is also seen to make contacts with the A and possibly P site tRNAs. In Staphylococcus epidermidis (strain ATCC 35984 / DSM 28319 / BCRC 17069 / CCUG 31568 / BM 3577 / RP62A), this protein is Large ribosomal subunit protein uL16.